Reading from the N-terminus, the 597-residue chain is Elongation factor 4 (597 aa).

The 183-residue stretch at 2–184 folds into the tr-type G domain; that stretch reads DHIRNFSIIA…SLIAKVPPPK (183 aa). GTP is bound by residues 14–19 and 131–134; these read DHGKST and NKID.

The protein belongs to the TRAFAC class translation factor GTPase superfamily. Classic translation factor GTPase family. LepA subfamily.

It is found in the cell inner membrane. The enzyme catalyses GTP + H2O = GDP + phosphate + H(+). In terms of biological role, required for accurate and efficient protein synthesis under certain stress conditions. May act as a fidelity factor of the translation reaction, by catalyzing a one-codon backward translocation of tRNAs on improperly translocated ribosomes. Back-translocation proceeds from a post-translocation (POST) complex to a pre-translocation (PRE) complex, thus giving elongation factor G a second chance to translocate the tRNAs correctly. Binds to ribosomes in a GTP-dependent manner. This is Elongation factor 4 from Burkholderia lata (strain ATCC 17760 / DSM 23089 / LMG 22485 / NCIMB 9086 / R18194 / 383).